The sequence spans 538 residues: Glutamyl-tRNA(Gln) amidotransferase subunit B, mitochondrial (538 aa).

It belongs to the GatB/GatE family. GatB subfamily. Subunit of the heterotrimeric GatCAB amidotransferase (AdT) complex, composed of A, B and C subunits.

It is found in the mitochondrion. It carries out the reaction L-glutamyl-tRNA(Gln) + L-glutamine + ATP + H2O = L-glutaminyl-tRNA(Gln) + L-glutamate + ADP + phosphate + H(+). Its function is as follows. Allows the formation of correctly charged Gln-tRNA(Gln) through the transamidation of misacylated Glu-tRNA(Gln) in the mitochondria. The reaction takes place in the presence of glutamine and ATP through an activated gamma-phospho-Glu-tRNA(Gln). In Dictyostelium discoideum (Social amoeba), this protein is Glutamyl-tRNA(Gln) amidotransferase subunit B, mitochondrial.